The sequence spans 436 residues: Gamma-glutamyl phosphate reductase (436 aa).

The protein belongs to the gamma-glutamyl phosphate reductase family.

It localises to the cytoplasm. It carries out the reaction L-glutamate 5-semialdehyde + phosphate + NADP(+) = L-glutamyl 5-phosphate + NADPH + H(+). Its pathway is amino-acid biosynthesis; L-proline biosynthesis; L-glutamate 5-semialdehyde from L-glutamate: step 2/2. In terms of biological role, catalyzes the NADPH-dependent reduction of L-glutamate 5-phosphate into L-glutamate 5-semialdehyde and phosphate. The product spontaneously undergoes cyclization to form 1-pyrroline-5-carboxylate. The polypeptide is Gamma-glutamyl phosphate reductase (Prochlorococcus marinus (strain MIT 9215)).